A 306-amino-acid chain; its full sequence is MSEGRTDGDTWGPAQSVGATATMVAAARAVASQGPDALLDDPLAEPLVRAVGLDPFIRIVDGKLDFPDDPLFNRRARAEQITVRTRFFDDFFIDATEGGLRQAVILASGLDTRAYRLAWPAGTVVYEIDQPQVIAFKTDTLANLGAAPTAERRTISIDLRDDWPAALREGGFDVTRPTAWSAEGLLPYLPPEAQDRLFDNITALSAPGSRLATEHVPDPNAFSDERLARISERWQRLGLNLNAADLFYRGERNVVADYLTGKGWRVTPHPARQLYARNGFEFPEDEMRATFGEMSYVDATLTGGRG.

S-adenosyl-L-methionine-binding positions include Asp-129 and 158-159 (DL).

It belongs to the UPF0677 family.

In terms of biological role, exhibits S-adenosyl-L-methionine-dependent methyltransferase activity. The sequence is that of Putative S-adenosyl-L-methionine-dependent methyltransferase MAV_4442 from Mycobacterium avium (strain 104).